Consider the following 367-residue polypeptide: MKEPLDLSKYSVRTDLAVEAHQMLQERQEEQKGIEGVIVKEREEEGITVTKVTIDEAASDSMGKKPGNYLTLEVQGIRQQDTELQQKVERIFAKEFSYFLEEVGVTKEASCLIVGLGNWNVTPDALGPIVVENVLVTRHLFQLQPESVEEGFRPVSAIRPGVMGITGIETSDVIYGIIEKTKPDFVIAIDALAARSIERVNSTIQISDTGIHPGSGVGNKRKELSKETLGIPVIAIGVPTVVDAVSITSDTIDFILKHFGREMKEGNKPSRSLLPAGFTFGEKKKLTEEDMPDEKSRNMFLGAVGTLGDEEKRKLIYEVLSPLGHNLMVTPKEVDAFIEDMANVIASGLNAALHHQIDQDNTGAYTH.

Residues 1–15 constitute a propeptide that is removed on maturation; that stretch reads MKEPLDLSKYSVRTD.

Belongs to the peptidase A25 family. In terms of assembly, homotetramer. In terms of processing, autoproteolytically processed. The inactive tetrameric zymogen termed p46 autoprocesses to a smaller form termed p41, which is active only during spore germination.

It catalyses the reaction Endopeptidase action with P4 Glu or Asp, P1 preferably Glu &gt; Asp, P1' hydrophobic and P2' Ala.. Functionally, initiates the rapid degradation of small, acid-soluble proteins during spore germination. The protein is Germination protease of Bacillus cereus (strain ATCC 10987 / NRS 248).